The chain runs to 344 residues: Putative replication factor C small subunit L499 (344 aa).

57–64 contributes to the ATP binding site; it reads GPSGSGKT.

The protein belongs to the activator 1 small subunits family. RfcS subfamily.

Its function is as follows. Part of the RFC clamp loader complex which loads the PCNA sliding clamp onto DNA. This Acanthamoeba polyphaga mimivirus (APMV) protein is Putative replication factor C small subunit L499.